A 716-amino-acid chain; its full sequence is MSLMGHGKVEMLLYAVPLLKAPNCLSSSMQLPHGGGRHQELVRFRDVAVVFSPEEWDHLTPEQRNLYKDVMLDNCKYLASLGNWTYKAHVMSSLKQGKEPWMMEREVTGDPCPACQPALATFRALNESGNAFRQSFHHGEYRTHRTFVQHYECDDCGMAFGHVSQLTGHQKIHKVGETHEYGENTRGFRHRSSFTMLQRICTLYKHFECNQCGETFNRPSKVIQHQSMHSGLKPYKCDVCQKAFRFLSSLSIHQRFHVGNRVNLTRHQKTHTQRKPFSCNFCGKTFHRFSEKTQHLLIHTRKKYYTCNYCKKEFNPYSKFILHQRTHTGEKPHKCDVCEKSFKSISNLNKHQKTHTGEKPFSCNECKKTFAQRTDLARHQQIHTGKKSFICSSCKKTFVRLSDLTQHKGTHTGERPYQCTTCEKAFKYRSNFTKHQKTHSIGRPFACNECGKTYRLNWELNQHKKIHTGEKPYECGECGKRFNNNSNLNKHKKIHTGEKHFVCNQCGKAFSLNSKLSRHQRTHNKKENSSKSVSNLNKHQKTHAGEKPFPCNECKKAFAQRMDLARHQQIHTGRKPFICSSCKKTFVRLSDLTQHKGTHTGERPYQCTTCEKAFKYQSNFTKHQKTHSIGRPFTCNECGKTFRLNWKLNQHKKIHTGEKPYECGECGKCFNNNSNLSKHKKIHTGEKHFVCNQCGKAFSLNSKLSRHQITHNKKKP.

Residues 42–113 (VRFRDVAVVF…EREVTGDPCP (72 aa)) form the KRAB domain. 18 C2H2-type zinc fingers span residues 151–173 (YECD…QKIH), 207–229 (FECN…QSMH), 235–257 (YKCD…QRFH), 277–299 (FSCN…LLIH), 305–327 (YTCN…QRTH), 333–355 (HKCD…QKTH), 361–383 (FSCN…QQIH), 389–411 (FICS…KGTH), 417–439 (YQCT…QKTH), 445–467 (FACN…KKIH), 473–495 (YECG…KKIH), 501–523 (FVCN…QRTH), 549–571 (FPCN…QQIH), 577–599 (FICS…KGTH), 605–627 (YQCT…QKTH), 633–655 (FTCN…KKIH), 661–683 (YECG…KKIH), and 689–711 (FVCN…QITH). The segment at 515–548 (KLSRHQRTHNKKENSSKSVSNLNKHQKTHAGEKP) is disordered.

This sequence belongs to the krueppel C2H2-type zinc-finger protein family.

It localises to the nucleus. Its function is as follows. May be involved in transcriptional regulation. The polypeptide is Zinc finger protein 840 (ZNF840P) (Homo sapiens (Human)).